The following is a 95-amino-acid chain: Selenoprotein K (95 aa).

Residues 20–42 (LSFITDFFWGIAEFVVLFFRTLL) traverse the membrane as a helical segment. A disordered region spans residues 47–95 (KKRRGYGSSSDSRYDDGRGPPGNPPRRRMGRINHLQGPNPPPMAGGUGR). Sec93 is a non-standard amino acid (selenocysteine).

It belongs to the selenoprotein K family. In terms of assembly, interacts with DERL1, DERL2, DERL3 and SELENOS. The SELENOK-SELENOS complex interacts with VCP. Interacts with ZDHHC6. In terms of processing, cleaved by CAPN2/m-calpain in resting macrophages but not in activated macrophages. Macrophage activation up-regulates expression of the calpain inhibitor CAST/calpastatin, resulting in inhibition of CAPN2 activity. Truncated SELENOK proteins produced by failed UGA/Sec decoding are ubiquitinated by the CRL2(KLHDC2) complex, which recognizes the diglycine (Gly-Gly) at the C-terminus of truncated SELENOK proteins.

It is found in the endoplasmic reticulum membrane. The protein resides in the cell membrane. Functionally, required for Ca(2+) flux in immune cells and plays a role in T-cell proliferation and in T-cell and neutrophil migration. Involved in endoplasmic reticulum-associated degradation (ERAD) of soluble glycosylated proteins. Required for palmitoylation and cell surface expression of CD36 and involved in macrophage uptake of low-density lipoprotein and in foam cell formation. Together with ZDHHC6, required for palmitoylation of ITPR1 in immune cells, leading to regulate ITPR1 stability and function. Plays a role in protection of cells from ER stress-induced apoptosis. Protects cells from oxidative stress when overexpressed in cardiomyocytes. The polypeptide is Selenoprotein K (Bos taurus (Bovine)).